A 356-amino-acid polypeptide reads, in one-letter code: Nicotinate-nucleotide--dimethylbenzimidazole phosphoribosyltransferase (356 aa).

Glu317 (proton acceptor) is an active-site residue.

This sequence belongs to the CobT family. Homodimer.

The enzyme catalyses 5,6-dimethylbenzimidazole + nicotinate beta-D-ribonucleotide = alpha-ribazole 5'-phosphate + nicotinate + H(+). The protein operates within nucleoside biosynthesis; alpha-ribazole biosynthesis; alpha-ribazole from 5,6-dimethylbenzimidazole: step 1/2. Its function is as follows. Catalyzes the synthesis of alpha-ribazole-5'-phosphate from nicotinate mononucleotide (NAMN) and 5,6-dimethylbenzimidazole (DMB). The protein is Nicotinate-nucleotide--dimethylbenzimidazole phosphoribosyltransferase of Salmonella dublin (strain CT_02021853).